Consider the following 489-residue polypeptide: COX3 mRNA-specific translational activator PET494 (489 aa).

It is found in the mitochondrion inner membrane. Functionally, required for the expression of the mitochondrial gene for cytochrome c oxidase subunit III (COX3). The protein is COX3 mRNA-specific translational activator PET494 (PET494) of Saccharomyces bayanus (Yeast).